Reading from the N-terminus, the 287-residue chain is Phosphatidylserine decarboxylase proenzyme (287 aa).

Residues aspartate 90, histidine 147, and serine 253 each act as charge relay system; for autoendoproteolytic cleavage activity in the active site. Serine 253 functions as the Schiff-base intermediate with substrate; via pyruvic acid; for decarboxylase activity in the catalytic mechanism. Serine 253 is subject to Pyruvic acid (Ser); by autocatalysis.

The protein belongs to the phosphatidylserine decarboxylase family. PSD-B subfamily. Prokaryotic type I sub-subfamily. Heterodimer of a large membrane-associated beta subunit and a small pyruvoyl-containing alpha subunit. The cofactor is pyruvate. Is synthesized initially as an inactive proenzyme. Formation of the active enzyme involves a self-maturation process in which the active site pyruvoyl group is generated from an internal serine residue via an autocatalytic post-translational modification. Two non-identical subunits are generated from the proenzyme in this reaction, and the pyruvate is formed at the N-terminus of the alpha chain, which is derived from the carboxyl end of the proenzyme. The autoendoproteolytic cleavage occurs by a canonical serine protease mechanism, in which the side chain hydroxyl group of the serine supplies its oxygen atom to form the C-terminus of the beta chain, while the remainder of the serine residue undergoes an oxidative deamination to produce ammonia and the pyruvoyl prosthetic group on the alpha chain. During this reaction, the Ser that is part of the protease active site of the proenzyme becomes the pyruvoyl prosthetic group, which constitutes an essential element of the active site of the mature decarboxylase.

It is found in the cell membrane. It catalyses the reaction a 1,2-diacyl-sn-glycero-3-phospho-L-serine + H(+) = a 1,2-diacyl-sn-glycero-3-phosphoethanolamine + CO2. The protein operates within phospholipid metabolism; phosphatidylethanolamine biosynthesis; phosphatidylethanolamine from CDP-diacylglycerol: step 2/2. Catalyzes the formation of phosphatidylethanolamine (PtdEtn) from phosphatidylserine (PtdSer). The polypeptide is Phosphatidylserine decarboxylase proenzyme (Aliivibrio fischeri (strain MJ11) (Vibrio fischeri)).